Here is a 371-residue protein sequence, read N- to C-terminus: Alanine dehydrogenase (371 aa).

Substrate is bound by residues arginine 15 and lysine 74. Histidine 95 functions as the Proton donor/acceptor in the catalytic mechanism. Residues serine 133, 177 to 178 (QA), aspartate 197, serine 219, 238 to 239 (VL), 266 to 269 (IAID), arginine 279, and 298 to 301 (VANM) each bind NAD(+). Aspartate 269 (proton donor/acceptor) is an active-site residue.

It belongs to the AlaDH/PNT family. In terms of assembly, homohexamer. Trimer of dimer.

The catalysed reaction is L-alanine + NAD(+) + H2O = pyruvate + NH4(+) + NADH + H(+). Its pathway is amino-acid degradation; L-alanine degradation via dehydrogenase pathway; NH(3) and pyruvate from L-alanine: step 1/1. Functionally, catalyzes the reversible reductive amination of pyruvate to L-alanine. May play a role in cell wall synthesis as L-alanine is an important constituent of the peptidoglycan layer. The sequence is that of Alanine dehydrogenase (ald) from Staphylococcus saprophyticus subsp. saprophyticus (strain ATCC 15305 / DSM 20229 / NCIMB 8711 / NCTC 7292 / S-41).